Consider the following 215-residue polypeptide: MGTHMYSEQGINNTINISTTSLTNATQLTVIGNNNSVYIGNNCKIVSSNIRLKGNNITLFIADDVENMGLVCSLHSDCSLQIQAKTTMGNGEITIAEKGKISIGKDCMLAHGYEIRNTDMHPIYSLENGERINHGKDVIIGNHVWLGRNVTILKGVCIPNNVVVGSHTVLYKSFKEPNCVIAGSPAKIVKENIVWGRKMYHSTMYDDPTLNEFYK.

Acetyl-CoA contacts are provided by residues 119 to 121 (DMH), Arg-148, Lys-154, Ser-166, 171 to 172 (YK), and Lys-190.

Belongs to the transferase hexapeptide repeat family. Homotrimer.

The enzyme catalyses [(2-&gt;6)-alpha-D-glucosyl-(1-&gt;4)-N-acetyl-alpha-D-neuraminosyl](n) + n acetyl-CoA = [(2-&gt;6)-alpha-D-glucosyl-(1-&gt;4)-N,7-O-diacetyl-alpha-D-neuraminosyl](n) + n CoA. The catalysed reaction is [(2-&gt;6)-alpha-D-glucosyl-(1-&gt;4)-N-acetyl-alpha-D-neuraminosyl](n) + n acetyl-CoA = [(2-&gt;6)-alpha-D-glucosyl-(1-&gt;4)-N,O(9)-diacetyl-alpha-D-neuraminosyl](n) + n CoA. In terms of biological role, catalyzes the O-acetylation of capsular polymeric sialic acid consisting of polymers of (2-&gt;6)-alpha-D-glucosyl-(1-&gt;4)-N-acetyl-alpha-D-neuraminosyl residues. Shows high substrate specificity toward polymers of sialic acid that contains a large number of residues. The polypeptide is Polysialic acid O-acetyltransferase (Neisseria meningitidis).